Consider the following 143-residue polypeptide: Large ribosomal subunit protein uL11 (143 aa).

This sequence belongs to the universal ribosomal protein uL11 family. As to quaternary structure, part of the ribosomal stalk of the 50S ribosomal subunit. Interacts with L10 and the large rRNA to form the base of the stalk. L10 forms an elongated spine to which L12 dimers bind in a sequential fashion forming a multimeric L10(L12)X complex. Post-translationally, one or more lysine residues are methylated.

Functionally, forms part of the ribosomal stalk which helps the ribosome interact with GTP-bound translation factors. This Pseudomonas entomophila (strain L48) protein is Large ribosomal subunit protein uL11.